The following is a 574-amino-acid chain: Arginine--tRNA ligase (574 aa).

Residues 121–131 (PNIAKEMHIGH) carry the 'HIGH' region motif.

This sequence belongs to the class-I aminoacyl-tRNA synthetase family. In terms of assembly, monomer.

Its subcellular location is the cytoplasm. It carries out the reaction tRNA(Arg) + L-arginine + ATP = L-arginyl-tRNA(Arg) + AMP + diphosphate. The protein is Arginine--tRNA ligase of Buchnera aphidicola subsp. Acyrthosiphon pisum (strain Tuc7).